The primary structure comprises 234 residues: Endonuclease V (234 aa).

The Mg(2+) site is built by D36 and D104.

The protein belongs to the endonuclease V family. The cofactor is Mg(2+).

Its subcellular location is the cytoplasm. It carries out the reaction Endonucleolytic cleavage at apurinic or apyrimidinic sites to products with a 5'-phosphate.. In terms of biological role, DNA repair enzyme involved in the repair of deaminated bases. Selectively cleaves double-stranded DNA at the second phosphodiester bond 3' to a deoxyinosine leaving behind the intact lesion on the nicked DNA. This Yersinia pseudotuberculosis serotype O:1b (strain IP 31758) protein is Endonuclease V.